The chain runs to 647 residues: MKKEEYLEKVALANLWMRAYYEKDEPLASDEEYDVLIRELRVFEEQNKDEISKDSPTQKIAPTIQSEFKKIAHLKRMWSMEDVFDESELRAWAKRAKCEKNFFIEPKFDGASLNLLYENGKLVSGATRGDGEVGEDITLNVFEIENIPKNIAYKERIEIRGEVVILKDDFEKINEKRALLNQSLFANPRNAASGSLRQLDTSITKERNLKFYPWGVGENTLNFTKHSEVMQFIRELGFLKDDFIKLCANLDEVLKAYDELLALREKKPMMMDGMVVRIDDLALCEELGYTVKFPKFMAAFKFPALEKTTRLIGVNLQVGRSGVITPVAVLEPVNLDGVVVKSATLHNFDEIARLDVKINDFVSVIRSGDVIPKITKVFKDRREGLEMEISRPKLCPTCQSELLDEGTLIKCQNIDCEDRLVNSIIHFVSKKCLNIDGLGENIVELLYKHKKITTLESIFHLKFSDFEGLEGFKEKKINNLLNAIEQARECELFRFITALGIEHIGEVAAKKLSLSFGKEWHKQSFEAYANLEGFGEQMALSLCEFTRVNHVRIDEFYKLLNLKIEKLEIKSDGVIFGKTFVITGTLSRPRDEFKALIEKLGGKVSSSVSKKTDYVLFGEEAGSKLIKAKELEVKCIDESAFNELVKE.

NAD(+) contacts are provided by residues 30-34, 79-80, and Glu-105; these read DEEYD and SM. Lys-107 functions as the N6-AMP-lysine intermediate in the catalytic mechanism. NAD(+)-binding residues include Arg-128, Glu-162, and Lys-301. Zn(2+)-binding residues include Cys-395, Cys-398, Cys-411, and Cys-416. Residues 570–647 form the BRCT domain; the sequence is KSDGVIFGKT…ESAFNELVKE (78 aa).

It belongs to the NAD-dependent DNA ligase family. LigA subfamily. Mg(2+) is required as a cofactor. Mn(2+) serves as cofactor.

It carries out the reaction NAD(+) + (deoxyribonucleotide)n-3'-hydroxyl + 5'-phospho-(deoxyribonucleotide)m = (deoxyribonucleotide)n+m + AMP + beta-nicotinamide D-nucleotide.. Its function is as follows. DNA ligase that catalyzes the formation of phosphodiester linkages between 5'-phosphoryl and 3'-hydroxyl groups in double-stranded DNA using NAD as a coenzyme and as the energy source for the reaction. It is essential for DNA replication and repair of damaged DNA. The chain is DNA ligase from Campylobacter jejuni subsp. jejuni serotype O:23/36 (strain 81-176).